The sequence spans 268 residues: MSAPDTVSPLDLRFSAAELAERRDRIQSFIRDTVAAAGAERCVLGLSGGIDSTTVAHLTVDELGADALHGLVMPGAVSRDQNMSDAERVAEDLGIEYDVVEIDPFVTQLTDVFPDAAGDEVAVGNARARTRAVINYFVANHGDGVVLGTGNRAEAMTGYYTKYGDQAVDCNPIGNLYKMQVRQLARDLGVPEDLVTKAPTAELWADQTDAGELGVDYDTIDAVLAVHVDGGLPASATATHLDIDPSVVETVRDLYGASKHKRAMPPAP.

45–52 (GLSGGIDS) is an ATP binding site. Position 51 (D51) interacts with Mg(2+). R129 contributes to the deamido-NAD(+) binding site. T149 serves as a coordination point for ATP. E154 provides a ligand contact to Mg(2+). K162 and D169 together coordinate deamido-NAD(+). ATP is bound by residues K178 and T200. Residue 260–261 (HK) coordinates deamido-NAD(+).

It belongs to the NAD synthetase family. In terms of assembly, homodimer.

The enzyme catalyses deamido-NAD(+) + NH4(+) + ATP = AMP + diphosphate + NAD(+) + H(+). It participates in cofactor biosynthesis; NAD(+) biosynthesis; NAD(+) from deamido-NAD(+) (ammonia route): step 1/1. Catalyzes the ATP-dependent amidation of deamido-NAD to form NAD. Uses ammonia as a nitrogen source. The protein is NH(3)-dependent NAD(+) synthetase of Halobacterium salinarum (strain ATCC 29341 / DSM 671 / R1).